The chain runs to 213 residues: Charged multivesicular body protein 2b (213 aa).

Ala-2 is subject to N-acetylalanine. The stretch at 25 to 55 forms a coiled coil; that stretch reads QRAIIRDRAALEKQEKQLELEIKKMAKIGNK. A disordered region spans residues 178-202; it reads MAKAPSAARSLPSASTSKSTISDEE. The span at 179–194 shows a compositional bias: low complexity; sequence AKAPSAARSLPSASTS. Position 199 is a phosphoserine (Ser-199). The MIT-interacting motif motif lies at 201 to 211; sequence EEIERQLKALG.

The protein belongs to the SNF7 family. Probable core component of the endosomal sorting required for transport complex III (ESCRT-III). ESCRT-III components are thought to multimerize to form a flat lattice on the perimeter membrane of the endosome. Several assembly forms of ESCRT-III may exist that interact and act sequentially. Interacts with CHMP2A. Interacts with VPS4A. Interacts with VPS4B; the interaction is direct.

The protein localises to the cytoplasm. It localises to the cytosol. It is found in the late endosome membrane. Functionally, probable core component of the endosomal sorting required for transport complex III (ESCRT-III) which is involved in multivesicular bodies (MVBs) formation and sorting of endosomal cargo proteins into MVBs. MVBs contain intraluminal vesicles (ILVs) that are generated by invagination and scission from the limiting membrane of the endosome and mostly are delivered to lysosomes enabling degradation of membrane proteins, such as stimulated growth factor receptors, lysosomal enzymes and lipids. The MVB pathway appears to require the sequential function of ESCRT-O, -I,-II and -III complexes. ESCRT-III proteins mostly dissociate from the invaginating membrane before the ILV is released. The ESCRT machinery also functions in topologically equivalent membrane fission events, such as the terminal stages of cytokinesis and the budding of enveloped viruses (lentiviruses). ESCRT-III proteins are believed to mediate the necessary vesicle extrusion and/or membrane fission activities, possibly in conjunction with the AAA ATPase VPS4. This Bos taurus (Bovine) protein is Charged multivesicular body protein 2b (CHMP2B).